Consider the following 157-residue polypeptide: Protein Smg homolog (157 aa).

This sequence belongs to the Smg family.

This Shewanella denitrificans (strain OS217 / ATCC BAA-1090 / DSM 15013) protein is Protein Smg homolog.